We begin with the raw amino-acid sequence, 147 residues long: Membrane-spanning 4-domains subfamily A member 6E (147 aa).

Residues 1-52 (MTSQPISNETIIMLPSNVINFSQAEKPEPTNQGQDSLKKRLQAKVKVIGVHS) are Cytoplasmic-facing. Residues 53-73 (SLAGSILSALSALVGFILLSV) traverse the membrane as a helical segment. Residues 74–120 (NPAALNPASLQCKLDEKDIPTRLLLSYDYHSPYTMDCHRAKASLAGT) are Extracellular-facing. Residues 121-141 (LSLMLVSTVLEFCLAVLTAVL) traverse the membrane as a helical segment. Residues 142 to 147 (QWKQTV) are Cytoplasmic-facing.

This sequence belongs to the MS4A family. As to expression, expressed by malignant and fetal tissue at very low levels.

It localises to the membrane. In terms of biological role, may be involved in signal transduction as a component of a multimeric receptor complex. In Homo sapiens (Human), this protein is Membrane-spanning 4-domains subfamily A member 6E (MS4A6E).